An 89-amino-acid polypeptide reads, in one-letter code: Small ribosomal subunit protein uS15 (89 aa).

This sequence belongs to the universal ribosomal protein uS15 family. Part of the 30S ribosomal subunit. Forms a bridge to the 50S subunit in the 70S ribosome, contacting the 23S rRNA.

Its function is as follows. One of the primary rRNA binding proteins, it binds directly to 16S rRNA where it helps nucleate assembly of the platform of the 30S subunit by binding and bridging several RNA helices of the 16S rRNA. Functionally, forms an intersubunit bridge (bridge B4) with the 23S rRNA of the 50S subunit in the ribosome. This is Small ribosomal subunit protein uS15 from Desulforudis audaxviator (strain MP104C).